Here is a 455-residue protein sequence, read N- to C-terminus: Cysteinylglycine-S-conjugate dipeptidase (455 aa).

His-92 is a binding site for Zn(2+). Asp-94 is an active-site residue. Asp-125 provides a ligand contact to Zn(2+). Glu-158 (proton acceptor) is an active-site residue. 3 residues coordinate Zn(2+): Glu-159, Glu-163, and His-428.

The protein belongs to the peptidase M20F family. Zn(2+) is required as a cofactor.

It carries out the reaction an S-substituted L-cysteinylglycine + H2O = an S-substituted L-cysteine + glycine. It catalyses the reaction S-(1-hydroxy-3-methylhexan-3-yl)-L-cysteinylglycine + H2O = S-(1-hydroxy-3-methylhexan-3-yl)-L-cysteine + glycine. The enzyme catalyses S-benzyl-L-cysteinylglycine + H2O = S-benzyl-L-cysteine + glycine. Its function is as follows. Metallopeptidase that hydrolyzes the Cys-Gly bond of Cys-Gly-S-conjugates. Involved in the formation of the human body odorant 3-methyl-3-sulfanylhexan-1-ol (3M3SH) from odorless axilla secretions. Catalyzes the hydrolysis of the Cys-Gly bond of the Cys-Gly-S-conjugate of 3M3SH, a key precursor secreted by apocrine glands in human axilla skin. The Cys-S-conjugate obtained is then cleaved by the Cys-S-conjugate beta-lyase MetC, which finally releases 3M3SH. This is Cysteinylglycine-S-conjugate dipeptidase from Corynebacterium striatum.